A 158-amino-acid polypeptide reads, in one-letter code: uncharacterized protein (158 aa).

The 128-residue stretch at 3–130 folds into the Nudix hydrolase domain; it reads YLQRVTNCVL…DGHILDFMMK (128 aa). Positions 34-55 match the Nudix box motif; it reads GKMESGESVRDSVIREYREETG. The Mg(2+) site is built by glutamate 49 and glutamate 53.

It belongs to the Nudix hydrolase family. Mg(2+) serves as cofactor.

This is an uncharacterized protein from Bacillus subtilis (strain 168).